The following is a 193-amino-acid chain: Corrinoid adenosyltransferase (193 aa).

ATP-binding positions include 5–13 (TKTGDKGQT), Lys-22, 130–135 (RRAERR), and Asn-154.

The protein belongs to the Cob(I)alamin adenosyltransferase family. In terms of assembly, homotrimer.

The protein localises to the cytoplasm. It catalyses the reaction 2 cob(II)yrinate a,c diamide + reduced [electron-transfer flavoprotein] + 2 ATP = 2 adenosylcob(III)yrinate a,c-diamide + 2 triphosphate + oxidized [electron-transfer flavoprotein] + 3 H(+). The enzyme catalyses 2 cob(II)alamin + reduced [electron-transfer flavoprotein] + 2 ATP = 2 adenosylcob(III)alamin + 2 triphosphate + oxidized [electron-transfer flavoprotein] + 3 H(+). Its pathway is cofactor biosynthesis; adenosylcobalamin biosynthesis; adenosylcobalamin from cob(II)yrinate a,c-diamide: step 2/7. In Bacillus subtilis (strain 168), this protein is Corrinoid adenosyltransferase (yvqK).